Consider the following 159-residue polypeptide: Small ribosomal subunit protein bS16 (159 aa).

A compositionally biased stretch (low complexity) spans 102–119 (GIPEAAEEAPATESVAEA). A disordered region spans residues 102-159 (GIPEAAEEAPATESVAEAEVADVPESELSEAATETAAAELSPPEAEVEKPQVEEAVEA). Residues 120 to 129 (EVADVPESEL) show a composition bias toward acidic residues. Residues 130–145 (SEAATETAAAELSPPE) are compositionally biased toward low complexity.

It belongs to the bacterial ribosomal protein bS16 family.

The polypeptide is Small ribosomal subunit protein bS16 (Synechococcus sp. (strain JA-2-3B'a(2-13)) (Cyanobacteria bacterium Yellowstone B-Prime)).